Here is a 573-residue protein sequence, read N- to C-terminus: 60 kDa heat shock protein, mitochondrial (573 aa).

Residues Met1–Tyr26 constitute a mitochondrion transit peptide. Position 31 is an N6-succinyllysine (Lys31). Phosphoserine occurs at positions 67 and 70. Lys75 is a binding site for ATP. Lys75 carries the N6-acetyllysine modification. Lys82 carries the post-translational modification N6-acetyllysine; alternate. At Lys82 the chain carries N6-succinyllysine; alternate. Lys87 is modified (N6-acetyllysine). A Phosphotyrosine modification is found at Tyr90. Residue Lys91 is modified to N6-acetyllysine. Asp111–Thr115 contacts ATP. The residue at position 125 (Lys125) is an N6-acetyllysine; alternate. Lys125 is modified (N6-succinyllysine; alternate). An N6-acetyllysine modification is found at Lys130. N6-acetyllysine; alternate is present on Lys133. At Lys133 the chain carries N6-succinyllysine; alternate. Lys133 is modified (N6-malonyllysine; alternate). N6-acetyllysine is present on Lys156. An N6-acetyllysine; alternate mark is found at Lys191, Lys202, Lys205, Lys218, and Lys236. Lys191, Lys202, Lys205, Lys218, and Lys236 each carry N6-succinyllysine; alternate. Lys249 carries the N6-acetyllysine modification. At Lys250 the chain carries N6-acetyllysine; alternate. Lys250 carries the post-translational modification N6-succinyllysine; alternate. Lys269 and Lys292 each carry N6-acetyllysine. Lys301 is modified (N6-succinyllysine). Lys314 is subject to N6-acetyllysine. The residue at position 352 (Lys352) is an N6-acetyllysine; alternate. At Lys352 the chain carries N6-succinyllysine; alternate. N6-acetyllysine is present on residues Lys359 and Lys389. At Lys396 the chain carries N6-acetyllysine; alternate. The residue at position 396 (Lys396) is an N6-succinyllysine; alternate. Residue Ser410 is modified to Phosphoserine. Gly440 contributes to the ATP binding site. An N6-acetyllysine modification is found at Lys469. Residue Lys481 is modified to N6-acetyllysine; alternate. At Lys481 the chain carries N6-succinyllysine; alternate. Residue Ser488 is modified to Phosphoserine. Asp520 contributes to the ATP binding site. Residue Lys551 forms a Glycyl lysine isopeptide (Lys-Gly) (interchain with G-Cter in SUMO2) linkage.

The protein belongs to the chaperonin (HSP60) family. As to quaternary structure, homoheptamer arranged in a ring structure. The functional units of these chaperonins consist of heptameric rings of the large subunit Hsp60, which function as a back-to-back double ring. Interacts with 2 heptameric Hsp10 rings to form the symmetrical football complex. Interacts with HRAS. Interacts with ATAD3A. Interacts with ETFBKMT and EEF1AKMT3. Interacts with MFHAS1. (Microbial infection) Interacts with hepatitis B virus/HBV protein X. In terms of assembly, (Microbial infection) Interacts with HTLV-1 protein p40tax.

It localises to the mitochondrion matrix. The catalysed reaction is ATP + H2O + a folded polypeptide = ADP + phosphate + an unfolded polypeptide.. In terms of biological role, chaperonin implicated in mitochondrial protein import and macromolecular assembly. Together with Hsp10, facilitates the correct folding of imported proteins. May also prevent misfolding and promote the refolding and proper assembly of unfolded polypeptides generated under stress conditions in the mitochondrial matrix. The functional units of these chaperonins consist of heptameric rings of the large subunit Hsp60, which function as a back-to-back double ring. In a cyclic reaction, Hsp60 ring complexes bind one unfolded substrate protein per ring, followed by the binding of ATP and association with 2 heptameric rings of the co-chaperonin Hsp10. This leads to sequestration of the substrate protein in the inner cavity of Hsp60 where, for a certain period of time, it can fold undisturbed by other cell components. Synchronous hydrolysis of ATP in all Hsp60 subunits results in the dissociation of the chaperonin rings and the release of ADP and the folded substrate protein. This is 60 kDa heat shock protein, mitochondrial (HSPD1) from Homo sapiens (Human).